A 21-amino-acid chain; its full sequence is Azemiopsin (21 aa).

Over residues 1–14 the composition is skewed to pro residues; sequence DNWWPKPPHQGPRP. Residues 1–21 are disordered; sequence DNWWPKPPHQGPRPPRPRPKP. Implicated in receptor binding regions lie at residues 3–6, 8–11, and 13–14; these read WWPK, PHQG, and RP.

Monomer. Expressed by the venom gland.

The protein localises to the secreted. In terms of biological role, in vitro, reversibly blocks human muscle-type nicotinic acetylcholine receptors (nAChR) alpha-1-beta-1-epsilon-delta/CHRNA1-CHRNB1-CHRNE-CHRND (EC(50)=0.44 uM) and alpha-1-beta-1-gamma-delta/CHRNA1-CHRNB1-CHRNG-CHRND (EC(50)=1.56 uM). Binds to nAChR from T.californica (IC(50)=0.03-0.18 uM), human neuronal nAChR alpha-7/CHRNA7 (IC(50)=22 uM) and acetylcholine-binding proteins (AChBP) from L.stagnalis (IC(50)=63 uM) and A.californica (IC(50)=230 uM). The sequence is that of Azemiopsin from Azemiops feae (Fea's viper).